The primary structure comprises 409 residues: tRNA-specific 2-thiouridylase MnmA (409 aa).

ATP contacts are provided by residues 43–50 (AMSGGVDS) and leucine 69. Cysteine 137 acts as the Nucleophile in catalysis. Cysteine 137 and cysteine 235 are oxidised to a cystine. Glycine 161 contacts ATP. The interaction with tRNA stretch occupies residues 185-187 (KDQ). Cysteine 235 acts as the Cysteine persulfide intermediate in catalysis.

Belongs to the MnmA/TRMU family.

It localises to the cytoplasm. The enzyme catalyses S-sulfanyl-L-cysteinyl-[protein] + uridine(34) in tRNA + AH2 + ATP = 2-thiouridine(34) in tRNA + L-cysteinyl-[protein] + A + AMP + diphosphate + H(+). Catalyzes the 2-thiolation of uridine at the wobble position (U34) of tRNA, leading to the formation of s(2)U34. This Caulobacter sp. (strain K31) protein is tRNA-specific 2-thiouridylase MnmA.